A 900-amino-acid chain; its full sequence is Vacuolar membrane protein pep3 (900 aa).

Residues 1-20 are disordered; sequence MSLAEDWIDPNSSEDSDIQE. TPR repeat units lie at residues 314-345, 373-406, 408-436, and 546-579; these read HLAFLDLDTLYIVNRVNGKESYQQRVNLSPHE, NNETREASLVFLEKGDFEKALECANTAKVRNTVL, GYAEFLMEHEEYERAATLYAETLKSVEEV, and MKDQSYIMHYWVQRENYEKALETLNEGVSQETLI. A CHCR repeat occupies 602–756; that stretch reads DLDVHALIPS…MFSKKSGIKE (155 aa). An RING-type; atypical zinc finger spans residues 837-884; the sequence is CWHCNQPLFSEPFVLFPCQHAFHRSCMLEKTYKLASEKNILKECQLCG.

This sequence belongs to the VPS18 family.

Its subcellular location is the vacuole membrane. Functionally, required for vacuolar biogenesis. The chain is Vacuolar membrane protein pep3 (pep3) from Schizosaccharomyces pombe (strain 972 / ATCC 24843) (Fission yeast).